The primary structure comprises 533 residues: Calcium/calmodulin-dependent protein kinase type II subunit delta (533 aa).

Position 2 is an N-acetylalanine (Ala2). A Protein kinase domain is found at Tyr14–Ile272. Residues Leu20 to Val28 and Lys43 each bind ATP. The active-site Proton acceptor is Asp136. Residues His283–Lys292 form an autoinhibitory domain region. The residue at position 287 (Thr287) is a Phosphothreonine; by autocatalysis. Residues Leu291–Lys301 are calmodulin-binding. Residues Thr306 and Thr307 each carry the phosphothreonine; by autocatalysis modification. The residue at position 315 (Ser315) is a Phosphoserine. Lys318 is modified (N6-acetyllysine). A phosphoserine mark is found at Ser319 and Ser364. The interval Thr337–Glu375 is disordered. A Phosphothreonine modification is found at Thr365. Position 367 is a phosphoserine (Ser367). 2 positions are modified to phosphothreonine: Thr370 and Thr371. Ser438, Ser524, and Ser528 each carry phosphoserine.

The protein belongs to the protein kinase superfamily. CAMK Ser/Thr protein kinase family. CaMK subfamily. In terms of assembly, CAMK2 is composed of 4 different chains: alpha (CAMK2A), beta (CAMK2B), gamma (CAMK2G), and delta (CAMK2D). The different isoforms assemble into homo- or heteromultimeric holoenzymes composed of 12 subunits with two hexameric rings stacked one on top of the other. Interacts with RRAD and CACNB2. Autophosphorylation of Thr-287 following activation by Ca(2+)/calmodulin. Phosphorylation of Thr-287 locks the kinase into an activated state. In terms of tissue distribution, expressed in liver.

Its subcellular location is the cell membrane. It is found in the sarcolemma. The protein localises to the sarcoplasmic reticulum membrane. The enzyme catalyses L-seryl-[protein] + ATP = O-phospho-L-seryl-[protein] + ADP + H(+). The catalysed reaction is L-threonyl-[protein] + ATP = O-phospho-L-threonyl-[protein] + ADP + H(+). With respect to regulation, activated by Ca(2+)/calmodulin. Binding of calmodulin results in conformational change that relieves intrasteric autoinhibition and allows autophosphorylation of Thr-287 which turns the kinase in a constitutively active form and confers to the kinase a Ca(2+)-independent activity. Its function is as follows. Calcium/calmodulin-dependent protein kinase involved in the regulation of Ca(2+) homeostatis and excitation-contraction coupling (ECC) in heart by targeting ion channels, transporters and accessory proteins involved in Ca(2+) influx into the myocyte, Ca(2+) release from the sarcoplasmic reticulum (SR), SR Ca(2+) uptake and Na(+) and K(+) channel transport. Targets also transcription factors and signaling molecules to regulate heart function. In its activated form, is involved in the pathogenesis of dilated cardiomyopathy and heart failure. Contributes to cardiac decompensation and heart failure by regulating SR Ca(2+) release via direct phosphorylation of RYR2 Ca(2+) channel on 'Ser-2808'. In the nucleus, phosphorylates the MEF2 repressor HDAC4, promoting its nuclear export and binding to 14-3-3 protein, and expression of MEF2 and genes involved in the hypertrophic program. Is essential for left ventricular remodeling responses to myocardial infarction. In pathological myocardial remodeling acts downstream of the beta adrenergic receptor signaling cascade to regulate key proteins involved in ECC. Regulates Ca(2+) influx to myocytes by binding and phosphorylating the L-type Ca(2+) channel subunit beta-2 CACNB2. In addition to Ca(2+) channels, can target and regulate the cardiac sarcolemmal Na(+) channel Nav1.5/SCN5A and the K+ channel Kv4.3/KCND3, which contribute to arrhythmogenesis in heart failure. Phosphorylates phospholamban (PLN/PLB), an endogenous inhibitor of SERCA2A/ATP2A2, contributing to the enhancement of SR Ca(2+) uptake that may be important in frequency-dependent acceleration of relaxation (FDAR) and maintenance of contractile function during acidosis. May participate in the modulation of skeletal muscle function in response to exercise, by regulating SR Ca(2+) transport through phosphorylation of PLN/PLB and triadin, a ryanodine receptor-coupling factor. In response to interferon-gamma (IFN-gamma) stimulation, catalyzes phosphorylation of STAT1, stimulating the JAK-STAT signaling pathway. In Oryctolagus cuniculus (Rabbit), this protein is Calcium/calmodulin-dependent protein kinase type II subunit delta (CAMK2D).